Reading from the N-terminus, the 219-residue chain is PKHD-type hydroxylase SYNPCC7002_A2658 (219 aa).

The region spanning 78–172 (TVHTLLFSRY…RLVAVGWVQS (95 aa)) is the Fe2OG dioxygenase domain. 3 residues coordinate Fe cation: His-96, Asp-98, and His-153. Arg-163 contributes to the 2-oxoglutarate binding site.

Fe(2+) serves as cofactor. L-ascorbate is required as a cofactor.

The protein is PKHD-type hydroxylase SYNPCC7002_A2658 of Picosynechococcus sp. (strain ATCC 27264 / PCC 7002 / PR-6) (Agmenellum quadruplicatum).